We begin with the raw amino-acid sequence, 117 residues long: UPF0295 protein YgzB (117 aa).

Transmembrane regions (helical) follow at residues 13 to 33 (TFAL…IFFK) and 41 to 61 (LFMI…FWIG).

This sequence belongs to the UPF0295 family.

It is found in the cell membrane. The polypeptide is UPF0295 protein YgzB (ygzB) (Bacillus subtilis (strain 168)).